The primary structure comprises 484 residues: tRNA sulfurtransferase (484 aa).

The THUMP domain maps to 63-167 (REMIERLTCT…DQRLYVIHNQ (105 aa)). ATP contacts are provided by residues 185–186 (LM), Lys-267, Gly-289, and Gln-298. The cysteines at positions 346 and 457 are disulfide-linked. Positions 405-483 (ALPGQIVIDI…GHANVRVYRP (79 aa)) constitute a Rhodanese domain. Cys-457 serves as the catalytic Cysteine persulfide intermediate.

Belongs to the ThiI family.

Its subcellular location is the cytoplasm. The enzyme catalyses [ThiI sulfur-carrier protein]-S-sulfanyl-L-cysteine + a uridine in tRNA + 2 reduced [2Fe-2S]-[ferredoxin] + ATP + H(+) = [ThiI sulfur-carrier protein]-L-cysteine + a 4-thiouridine in tRNA + 2 oxidized [2Fe-2S]-[ferredoxin] + AMP + diphosphate. It catalyses the reaction [ThiS sulfur-carrier protein]-C-terminal Gly-Gly-AMP + S-sulfanyl-L-cysteinyl-[cysteine desulfurase] + AH2 = [ThiS sulfur-carrier protein]-C-terminal-Gly-aminoethanethioate + L-cysteinyl-[cysteine desulfurase] + A + AMP + 2 H(+). The protein operates within cofactor biosynthesis; thiamine diphosphate biosynthesis. Catalyzes the ATP-dependent transfer of a sulfur to tRNA to produce 4-thiouridine in position 8 of tRNAs, which functions as a near-UV photosensor. Also catalyzes the transfer of sulfur to the sulfur carrier protein ThiS, forming ThiS-thiocarboxylate. This is a step in the synthesis of thiazole, in the thiamine biosynthesis pathway. The sulfur is donated as persulfide by IscS. This Pseudomonas putida (strain ATCC 47054 / DSM 6125 / CFBP 8728 / NCIMB 11950 / KT2440) protein is tRNA sulfurtransferase.